Here is a 188-residue protein sequence, read N- to C-terminus: Ribosome maturation factor RimM (188 aa).

The region spanning 98-171 (EGEFFQGDLV…RIVIHPPEYV (74 aa)) is the PRC barrel domain.

Belongs to the RimM family. Binds ribosomal protein uS19.

It is found in the cytoplasm. Its function is as follows. An accessory protein needed during the final step in the assembly of 30S ribosomal subunit, possibly for assembly of the head region. Essential for efficient processing of 16S rRNA. May be needed both before and after RbfA during the maturation of 16S rRNA. It has affinity for free ribosomal 30S subunits but not for 70S ribosomes. The chain is Ribosome maturation factor RimM from Myxococcus xanthus (strain DK1622).